The primary structure comprises 417 residues: MFLQNILSVLAFALLIDAAPVKRSTGFVTLDFNVKRSLVDPKDPTVEVKRSPLFLDIEPTEIPVDDTGRNDVGKRGPVAVKLDNEIITYSADITIGSNNQKLSVIVDTGSSDLWVPDSNAVCIPKWPGDRGDFCKNNGSYSPAASSTSKNLNTPFEIKYADGSVAQGNLYQDTVGIGGVSVRDQLFANVRSTSAHKGILGIGFQSNEATRTPYDNLPITLKKQGIISKNAYSLFLNSPEASSGQIIFGGIDKAKYSGSLVDLPITSDRTLSVGLRSVNVMGQNVNVNAGVLLDSGTTISYFTPNIARSIIYALGGQVHYDSSGNEAYVADCKTSGTVDFQFDRNLKISVPASEFLYQLYYTNGEPYPKCEIRVRESEDNILGDNFMRSAYIVYDLDDRKISMAQVKYTSQSNIVGIN.

The signal sequence occupies residues Met1 to Ala18. The propeptide at Ala19–Arg75 is activation peptide. Residues Tyr89–Ala403 form the Peptidase A1 domain. Asp107 is a catalytic residue. Cys122 and Cys134 are disulfide-bonded. The N-linked (GlcNAc...) asparagine glycan is linked to Asn137. Asp293 is a catalytic residue. Cys331 and Cys369 are joined by a disulfide.

This sequence belongs to the peptidase A1 family. O-glycosylated.

It localises to the secreted. The enzyme catalyses Preferential cleavage at the carboxyl of hydrophobic amino acids, but fails to cleave 15-Leu-|-Tyr-16, 16-Tyr-|-Leu-17 and 24-Phe-|-Phe-25 of insulin B chain. Activates trypsinogen, and degrades keratin.. The polypeptide is Candidapepsin-4 (SAP4) (Candida albicans (strain WO-1) (Yeast)).